A 209-amino-acid polypeptide reads, in one-letter code: Ion-translocating oxidoreductase complex subunit G (209 aa).

Residues 9–29 (GITLALFAAGATGLTAVVNSL) form a helical membrane-spanning segment. Position 175 is an FMN phosphoryl threonine (threonine 175).

It belongs to the RnfG family. The complex is composed of six subunits: RnfA, RnfB, RnfC, RnfD, RnfE and RnfG. It depends on FMN as a cofactor.

The protein localises to the cell inner membrane. Part of a membrane-bound complex that couples electron transfer with translocation of ions across the membrane. This chain is Ion-translocating oxidoreductase complex subunit G, found in Yersinia pestis.